Reading from the N-terminus, the 329-residue chain is Phosphate import ATP-binding protein PstB (329 aa).

Residues 83-325 (FEIENLNFWY…PKQKETNRYI (243 aa)) enclose the ABC transporter domain. Residue 116–123 (GKSGCGKS) participates in ATP binding.

It belongs to the ABC transporter superfamily. Phosphate importer (TC 3.A.1.7) family. In terms of assembly, the complex is composed of two ATP-binding proteins (PstB), two transmembrane proteins (PstC and PstA) and a solute-binding protein (PstS).

Its subcellular location is the cell membrane. It catalyses the reaction phosphate(out) + ATP + H2O = ADP + 2 phosphate(in) + H(+). Functionally, part of the ABC transporter complex PstSACB involved in phosphate import. Responsible for energy coupling to the transport system. This is Phosphate import ATP-binding protein PstB from Mycoplasma pneumoniae (strain ATCC 29342 / M129 / Subtype 1) (Mycoplasmoides pneumoniae).